The chain runs to 883 residues: Phosphoenolpyruvate carboxylase (883 aa).

Catalysis depends on residues histidine 138 and lysine 546.

This sequence belongs to the PEPCase type 1 family. Mg(2+) is required as a cofactor.

The enzyme catalyses oxaloacetate + phosphate = phosphoenolpyruvate + hydrogencarbonate. Its function is as follows. Forms oxaloacetate, a four-carbon dicarboxylic acid source for the tricarboxylic acid cycle. The sequence is that of Phosphoenolpyruvate carboxylase from Shigella dysenteriae serotype 1 (strain Sd197).